Reading from the N-terminus, the 409-residue chain is Chaetoglobosin A biosynthesis cluster protein C (409 aa).

One can recognise an HTH CENPB-type domain in the interval 51 to 120 (DLPANSRKLT…VKRQPQLRTR (70 aa)). A DNA-binding region (H-T-H motif) is located at residues 84–113 (RGVEDMANHLLRERDAPPVGKLWAHNFVKR). 2 disordered regions span residues 243–269 (PTHP…ETRS) and 320–350 (ANEP…QDPL). Over residues 255-269 (PWASKTPYNAQETRS) the composition is skewed to polar residues.

It localises to the nucleus. In terms of biological role, part of the gene cluster that mediates the biosynthesis of chaetoglobosin A which has a unique inhibitory activity against actin polymerization in mammalian cells. Chaetoglobosin A and its intermediates are involved in the morphological differentiation of C.globosum. The first step of the pathway is the synthesis of prochaetoglobosin I via condensation of one acetyl-CoA, 8 malonyl-CoA, and a L-tryptophan molecule by the PKS-NRPS hybrid synthetase cheA, followed by reduction of backbone double bond to install desired geometry by the enoyl reductase cheB. Further multiple oxidation steps performed by the cytochrome P450 monooxygenases cheE and cheG, as well as by the FAD-linked oxidoreductase cheF, lead to the formation of chaetoglobosin A. Depending on the order of action of these reductases, distinct intermediates can be identified. Within the pathway, the cytochrome P450 monooxygenase cheE catalyzes a stereospecific epoxidation on prochaetoglobosin I, cytoglobosin D, and chaetoglobosin J intermediates. The FAD-linked oxidoreductase cheF performs dehydrogenation of the C-20 hydroxyl groups in the 20-dihyrochaetoglobosin A and cytoglobosin D intermediates. Finally, the cytochrome P450 monooxygenase cheG can catalyze the stereospecific dihydroxylation of prochaetoglobosin I and prochaetoglobosin IV at C-19 and C-20, respectively. The Diels-Alderase cheD may play a role in the post-PKS-NRPS biosynthetic steps catalyzing Diels-Alder cyclization. This chain is Chaetoglobosin A biosynthesis cluster protein C, found in Chaetomium globosum (strain ATCC 6205 / CBS 148.51 / DSM 1962 / NBRC 6347 / NRRL 1970) (Soil fungus).